Reading from the N-terminus, the 220-residue chain is Peritrophin-55 (220 aa).

Positions 1–19 are cleaved as a signal peptide; the sequence is MKSVFVCTLVLALAHHAFA. Asn-29 is a glycosylation site (N-linked (GlcNAc...) asparagine). In terms of domain architecture, Chitin-binding type-2 spans 33 to 95; sequence ITPCLGNDII…NFIPAPTCEY (63 aa). The cysteines at positions 68 and 84 are disulfide-linked. Residues 116–165 are compositionally biased toward low complexity; it reads TTLKTTPSKTTPIVTTAPPSTPVPSTIVTNKPDPTTPKTTKPPKVTTTVN. The tract at residues 116–220 is disordered; the sequence is TTLKTTPSKT…TPPSIVQLQN (105 aa). The span at 197–210 shows a compositional bias: pro residues; the sequence is PTPPGMPPTPPSFG.

In terms of processing, glycosylated. Larval peritrophic membrane.

Functionally, may bind oligosaccharide structures. The polypeptide is Peritrophin-55 (Lucilia cuprina (Green bottle fly)).